Here is a 151-residue protein sequence, read N- to C-terminus: HTH-type transcriptional regulator TcaR (151 aa).

The HTH marR-type domain occupies 1 to 142 (MVKHLQDHIQ…VRQVLEVINH (142 aa)). Residues 54–77 (ISEITQRQGVNKAAVSRRIKKLID) constitute a DNA-binding region (H-T-H motif).

Functionally, involved in the antibiotic teicoplanin susceptibility. Inactivation of the tcaRAB operon leads to teicoplanin resistance. Its function is as follows. Is a weak negative regulator of transcription of the icaABD operon. The protein is HTH-type transcriptional regulator TcaR (tcaR) of Staphylococcus aureus (strain COL).